The chain runs to 65 residues: Large ribosomal subunit protein uL29 (65 aa).

It belongs to the universal ribosomal protein uL29 family.

In Bacteroides fragilis (strain ATCC 25285 / DSM 2151 / CCUG 4856 / JCM 11019 / LMG 10263 / NCTC 9343 / Onslow / VPI 2553 / EN-2), this protein is Large ribosomal subunit protein uL29.